The chain runs to 504 residues: Protein FMP42 (504 aa).

Over 1-11 (MTSTRTLRYAQ) the chain is Vacuolar. A helical transmembrane segment spans residues 12-32 (VACACIWCLFSAGIIFGFAAL). At 33–64 (KPILISEGVYHELCDPKDGDRLLCTAQDLKLN) the chain is on the cytoplasmic side. A helical transmembrane segment spans residues 65 to 85 (FIFALSATVTNIMALPVGKIL). Over 86–91 (DMYGPR) the chain is Vacuolar. A helical transmembrane segment spans residues 92 to 112 (VCGIIGSCLLFLASGNFISAK). The Cytoplasmic portion of the chain corresponds to 113–119 (HLVSLWD). A helical membrane pass occupies residues 120–140 (PYLVGYTLLAVAGPFVFISCF). At 141–150 (QLANSFPQRS) the chain is on the vacuolar side. Residues 151–171 (GTVLALLTGSFDSSSALFLLY) form a helical membrane-spanning segment. The Cytoplasmic portion of the chain corresponds to 172–186 (RLLYQNWFPTLNVSR). A helical membrane pass occupies residues 187–207 (FFTLYLIVPVFILACQLTIMP). Residues 208–302 (HSSYKTVNHI…KSAYEQIKSP (95 aa)) are Vacuolar-facing. 3 positions are modified to phosphoserine: S238, S249, and S269. Residues 303–323 (WFYLMLLFALVAMLRINYFIA) traverse the membrane as a helical segment. Over 324 to 344 (TVRTQEEYLLNDPDLALKLNS) the chain is Cytoplasmic. A helical transmembrane segment spans residues 345–365 (IFDMLLPLGGAVSIPFIGLLL). Over 366–385 (DHTDTLSTLTILFTTSTAIG) the chain is Vacuolar. A helical membrane pass occupies residues 386–406 (VFGLIPNSFTWNLIGIVLLVV). Residues 407–421 (YRPFYYTVVSDYSSK) are Cytoplasmic-facing. A helical transmembrane segment spans residues 422 to 442 (VFGFDTFGTVYGLLSCICGIF). Over 443–462 (NMSQNLLDKWTHTTFNMNPF) the chain is Vacuolar. Residues 463 to 483 (PINLTLVILTVVFSLTLTFYI) form a helical membrane-spanning segment. At 484 to 504 (RSQILPKPVNERGLSSNYQTI) the chain is on the cytoplasmic side.

It belongs to the SLC43A transporter (TC 2.A.1.44) family.

The protein localises to the vacuole membrane. The protein is Protein FMP42 (FMP42) of Saccharomyces cerevisiae (strain ATCC 204508 / S288c) (Baker's yeast).